We begin with the raw amino-acid sequence, 79 residues long: Sec-independent protein translocase protein TatA (79 aa).

The chain crosses the membrane as a helical span at residues 1 to 21; sequence MGGFTSIWHWVIVLLVIVLLF. Residues 54-79 form a disordered region; that stretch reads ELKTLDAQATQTKVHETSEIKSKQES. Basic and acidic residues predominate over residues 66–79; that stretch reads KVHETSEIKSKQES.

It belongs to the TatA/E family. The Tat system comprises two distinct complexes: a TatABC complex, containing multiple copies of TatA, TatB and TatC subunits, and a separate TatA complex, containing only TatA subunits. Substrates initially bind to the TatABC complex, which probably triggers association of the separate TatA complex to form the active translocon.

The protein resides in the cell inner membrane. Functionally, part of the twin-arginine translocation (Tat) system that transports large folded proteins containing a characteristic twin-arginine motif in their signal peptide across membranes. TatA could form the protein-conducting channel of the Tat system. The protein is Sec-independent protein translocase protein TatA of Helicobacter pylori (strain J99 / ATCC 700824) (Campylobacter pylori J99).